The chain runs to 185 residues: Alpha-S1-casein (185 aa).

Positions 1 to 15 (MRLLILTCLVAVALA) are cleaved as a signal peptide. Residues S31, S33, S41, S71, S85, S86, S88, S89, S90, and S91 each carry the phosphoserine modification.

It belongs to the alpha-casein family. In terms of assembly, heteromultimers of alpha-s1 casein and kappa-casein; disulfide-linked. In terms of processing, not glycosylated. In terms of tissue distribution, mammary gland specific. Secreted in milk.

Its subcellular location is the secreted. In terms of biological role, important role in the capacity of milk to transport calcium phosphate. Its function is as follows. Casoxin D acts as opioid antagonist and has vasorelaxing activity mediated by bradykinin B1 receptors. The protein is Alpha-S1-casein (CSN1S1) of Homo sapiens (Human).